Here is a 229-residue protein sequence, read N- to C-terminus: 3-dehydroquinate dehydratase (229 aa).

Residues 33-35 (EWR) and Arg-65 each bind 3-dehydroquinate. His-121 acts as the Proton donor/acceptor in catalysis. Lys-146 (schiff-base intermediate with substrate) is an active-site residue. Positions 188, 207, and 211 each coordinate 3-dehydroquinate.

This sequence belongs to the type-I 3-dehydroquinase family. In terms of assembly, homodimer.

The catalysed reaction is 3-dehydroquinate = 3-dehydroshikimate + H2O. It functions in the pathway metabolic intermediate biosynthesis; chorismate biosynthesis; chorismate from D-erythrose 4-phosphate and phosphoenolpyruvate: step 3/7. Functionally, involved in the third step of the chorismate pathway, which leads to the biosynthesis of aromatic amino acids. Catalyzes the cis-dehydration of 3-dehydroquinate (DHQ) and introduces the first double bond of the aromatic ring to yield 3-dehydroshikimate. This is 3-dehydroquinate dehydratase from Lactococcus lactis subsp. cremoris (strain MG1363).